Reading from the N-terminus, the 310-residue chain is CCR4-NOT transcription complex subunit 7 (310 aa).

A divalent metal cation-binding residues include D51, E53, D172, and D245.

This sequence belongs to the CAF1 family. As to quaternary structure, component of the CCR4-NOT complex at least composed of ccf-1, ccr-4 and let-711, which is required for germ cell development in hermaphrodites. Within the complex interacts with let-711. Highly expressed in the germline. In particular, highly expressed in germ cells that enter meiosis and progress through the pachytene stage.

The protein resides in the nucleus. Its subcellular location is the cytoplasm. It catalyses the reaction Exonucleolytic cleavage of poly(A) to 5'-AMP.. In terms of biological role, catalytic component of the CCR4-NOT complex which is one of the major cellular mRNA deadenylases and is linked to various cellular processes including bulk mRNA degradation, miRNA-mediated repression, translational repression during translational initiation and general transcription regulation. Within the complex, plays a role in miRNA-mediated deadenylation in embryos. Within the complex promotes germ cell development and fertility in hermaphrodites. Additional complex functions may be a consequence of its influence on mRNA expression. The sequence is that of CCR4-NOT transcription complex subunit 7 from Caenorhabditis elegans.